A 407-amino-acid polypeptide reads, in one-letter code: Dual-specificity RNA methyltransferase RlmN (407 aa).

The active-site Proton acceptor is the E136. A Radical SAM core domain is found at 144-378 (REDRGAVCIS…MDAGFASPIR (235 aa)). The cysteines at positions 151 and 389 are disulfide-linked. [4Fe-4S] cluster-binding residues include C158, C162, and C165. S-adenosyl-L-methionine is bound by residues 215-216 (GE), S247, 269-271 (SLH), and N346. C389 (S-methylcysteine intermediate) is an active-site residue.

It belongs to the radical SAM superfamily. RlmN family. Requires [4Fe-4S] cluster as cofactor.

It is found in the cytoplasm. The enzyme catalyses adenosine(2503) in 23S rRNA + 2 reduced [2Fe-2S]-[ferredoxin] + 2 S-adenosyl-L-methionine = 2-methyladenosine(2503) in 23S rRNA + 5'-deoxyadenosine + L-methionine + 2 oxidized [2Fe-2S]-[ferredoxin] + S-adenosyl-L-homocysteine. It carries out the reaction adenosine(37) in tRNA + 2 reduced [2Fe-2S]-[ferredoxin] + 2 S-adenosyl-L-methionine = 2-methyladenosine(37) in tRNA + 5'-deoxyadenosine + L-methionine + 2 oxidized [2Fe-2S]-[ferredoxin] + S-adenosyl-L-homocysteine. Its function is as follows. Specifically methylates position 2 of adenine 2503 in 23S rRNA and position 2 of adenine 37 in tRNAs. m2A2503 modification seems to play a crucial role in the proofreading step occurring at the peptidyl transferase center and thus would serve to optimize ribosomal fidelity. The sequence is that of Dual-specificity RNA methyltransferase RlmN from Gluconobacter oxydans (strain 621H) (Gluconobacter suboxydans).